The primary structure comprises 332 residues: MRIIFAGTPEPAVVALQKLIESHHEVAAVITRPDARRGRGRSLHPSPVKALAEEHGIEVLTPTTLKQGTEDGDALRARLAEIAPEAIPVVAYGNLITEDLLSLPKHGWVNLHFSLLPTWRGAAPVQAAIAAGDERTGATTFRIDQGLDTGDILATMEETIRPTDTADDLLTRLAYAGGDLLVETMNGLEDGSIIPQPQEGEATYAHKIATEDARIDWTAKVDVIDRHIRAHTPGPGAWTLLGESRLKVGPVSVVEPAELGELSDTTALTSLQPGEVHVAKKEVMVGTGSTPVRLGQIQPPGKKMMNAADWGRGLSSQASQAAEGGQVEVKFS.

Residue 114–117 (SLLP) coordinates (6S)-5,6,7,8-tetrahydrofolate.

This sequence belongs to the Fmt family.

The catalysed reaction is L-methionyl-tRNA(fMet) + (6R)-10-formyltetrahydrofolate = N-formyl-L-methionyl-tRNA(fMet) + (6S)-5,6,7,8-tetrahydrofolate + H(+). Its function is as follows. Attaches a formyl group to the free amino group of methionyl-tRNA(fMet). The formyl group appears to play a dual role in the initiator identity of N-formylmethionyl-tRNA by promoting its recognition by IF2 and preventing the misappropriation of this tRNA by the elongation apparatus. This is Methionyl-tRNA formyltransferase from Corynebacterium aurimucosum (strain ATCC 700975 / DSM 44827 / CIP 107346 / CN-1) (Corynebacterium nigricans).